The primary structure comprises 173 residues: NADH-ubiquinone oxidoreductase chain 6 (173 aa).

5 helical membrane-spanning segments follow: residues 1–21 (MTYF…AVAS), 27–47 (YGVV…LSLG), 48–68 (VSFV…VVFV), 87–107 (VVGY…VGGL), and 139–159 (CGVG…FVVL).

This sequence belongs to the complex I subunit 6 family.

It is found in the mitochondrion membrane. The enzyme catalyses a ubiquinone + NADH + 5 H(+)(in) = a ubiquinol + NAD(+) + 4 H(+)(out). In terms of biological role, core subunit of the mitochondrial membrane respiratory chain NADH dehydrogenase (Complex I) that is believed to belong to the minimal assembly required for catalysis. Complex I functions in the transfer of electrons from NADH to the respiratory chain. The immediate electron acceptor for the enzyme is believed to be ubiquinone. This is NADH-ubiquinone oxidoreductase chain 6 (MT-ND6) from Larus canus (Common gull).